Here is a 130-residue protein sequence, read N- to C-terminus: Large ribosomal subunit protein bL17 (130 aa).

This sequence belongs to the bacterial ribosomal protein bL17 family. As to quaternary structure, part of the 50S ribosomal subunit. Contacts protein L32.

The sequence is that of Large ribosomal subunit protein bL17 from Nitrosomonas eutropha (strain DSM 101675 / C91 / Nm57).